We begin with the raw amino-acid sequence, 256 residues long: Pimeloyl-[acyl-carrier protein] methyl ester esterase (256 aa).

Residues 15–242 (HLVLLHGWGL…AAHAPFISHP (228 aa)) form the AB hydrolase-1 domain. Substrate-binding positions include W22, 82–83 (SL), and 143–147 (FLALQ). Residue S82 is the Nucleophile of the active site. Residues D207 and H235 contribute to the active site. Substrate is bound at residue H235.

It belongs to the AB hydrolase superfamily. Carboxylesterase BioH family. As to quaternary structure, monomer.

The protein localises to the cytoplasm. The catalysed reaction is 6-carboxyhexanoyl-[ACP] methyl ester + H2O = 6-carboxyhexanoyl-[ACP] + methanol + H(+). It functions in the pathway cofactor biosynthesis; biotin biosynthesis. Functionally, the physiological role of BioH is to remove the methyl group introduced by BioC when the pimeloyl moiety is complete. It allows to synthesize pimeloyl-ACP via the fatty acid synthetic pathway through the hydrolysis of the ester bonds of pimeloyl-ACP esters. The polypeptide is Pimeloyl-[acyl-carrier protein] methyl ester esterase (Salmonella choleraesuis (strain SC-B67)).